The primary structure comprises 47 residues: Small, acid-soluble spore protein N (47 aa).

The segment at 1 to 47 (MPREHDKQSKFAPSHLGTKPVEYKRNKGKKMHDKSGETPIIMQTKGE) is disordered.

The protein belongs to the SspN family.

The protein resides in the spore core. The sequence is that of Small, acid-soluble spore protein N from Bacillus licheniformis (strain ATCC 14580 / DSM 13 / JCM 2505 / CCUG 7422 / NBRC 12200 / NCIMB 9375 / NCTC 10341 / NRRL NRS-1264 / Gibson 46).